We begin with the raw amino-acid sequence, 152 residues long: Transcriptional regulator MraZ (152 aa).

SpoVT-AbrB domains lie at 5-52 (ATLV…PLPE) and 81-124 (ASEC…DETT).

The protein belongs to the MraZ family. As to quaternary structure, forms oligomers.

It is found in the cytoplasm. The protein resides in the nucleoid. Functionally, negatively regulates its own expression and that of the subsequent genes in the proximal part of the division and cell wall (dcw) gene cluster. Acts by binding directly to DNA. May also regulate the expression of genes outside the dcw cluster. This Escherichia coli O45:K1 (strain S88 / ExPEC) protein is Transcriptional regulator MraZ.